A 232-amino-acid chain; its full sequence is Phosphatidylserine decarboxylase proenzyme (232 aa).

Residue Ser-190 is the Schiff-base intermediate with substrate; via pyruvic acid of the active site. Ser-190 carries the post-translational modification Pyruvic acid (Ser); by autocatalysis.

It belongs to the phosphatidylserine decarboxylase family. PSD-A subfamily. As to quaternary structure, heterodimer of a large membrane-associated beta subunit and a small pyruvoyl-containing alpha subunit. Pyruvate is required as a cofactor. Post-translationally, is synthesized initially as an inactive proenzyme. Formation of the active enzyme involves a self-maturation process in which the active site pyruvoyl group is generated from an internal serine residue via an autocatalytic post-translational modification. Two non-identical subunits are generated from the proenzyme in this reaction, and the pyruvate is formed at the N-terminus of the alpha chain, which is derived from the carboxyl end of the proenzyme. The post-translation cleavage follows an unusual pathway, termed non-hydrolytic serinolysis, in which the side chain hydroxyl group of the serine supplies its oxygen atom to form the C-terminus of the beta chain, while the remainder of the serine residue undergoes an oxidative deamination to produce ammonia and the pyruvoyl prosthetic group on the alpha chain.

The protein resides in the cell membrane. It carries out the reaction a 1,2-diacyl-sn-glycero-3-phospho-L-serine + H(+) = a 1,2-diacyl-sn-glycero-3-phosphoethanolamine + CO2. The protein operates within phospholipid metabolism; phosphatidylethanolamine biosynthesis; phosphatidylethanolamine from CDP-diacylglycerol: step 2/2. In terms of biological role, catalyzes the formation of phosphatidylethanolamine (PtdEtn) from phosphatidylserine (PtdSer). The polypeptide is Phosphatidylserine decarboxylase proenzyme (Cereibacter sphaeroides (strain KD131 / KCTC 12085) (Rhodobacter sphaeroides)).